The chain runs to 701 residues: Glycine--tRNA ligase beta subunit (701 aa).

Belongs to the class-II aminoacyl-tRNA synthetase family. In terms of assembly, tetramer of two alpha and two beta subunits.

Its subcellular location is the cytoplasm. The enzyme catalyses tRNA(Gly) + glycine + ATP = glycyl-tRNA(Gly) + AMP + diphosphate. This chain is Glycine--tRNA ligase beta subunit, found in Thiobacillus denitrificans (strain ATCC 25259 / T1).